The chain runs to 315 residues: MTDMLTTSRRPETPGQFLVAALYHFISFPRFADFREPLQAICDANGVKGTLLLAHEGINGTIAGSEEGIATVLAFLRAQPEFADLVHKESRASAMPFLRMKVRLKKEIVTMGVENIDPKKVVGTYVEPKDWNALISDPETLVIDTRNDYETAIGVFQGAVDPKTKTFREFPEWVRNNSGLHNKPKIAMYCTGGIRCEKATAFMKEQGFEEVYHLKGGILKYLEEIPPEESLWEGACFVFDERVSVTHGLQEGEHTLCHACRQPLTTEDLRSPLHEEGVSCVNCHDTRTEEDRERYRQRQRQIVLAKKRGARHLGS.

The Rhodanese domain maps to 136 to 230 (SDPETLVIDT…YLEEIPPEES (95 aa)). Catalysis depends on C190, which acts as the Cysteine persulfide intermediate.

It belongs to the TrhO family.

It catalyses the reaction uridine(34) in tRNA + AH2 + O2 = 5-hydroxyuridine(34) in tRNA + A + H2O. Its function is as follows. Catalyzes oxygen-dependent 5-hydroxyuridine (ho5U) modification at position 34 in tRNAs. The polypeptide is tRNA uridine(34) hydroxylase (Sinorhizobium medicae (strain WSM419) (Ensifer medicae)).